The primary structure comprises 297 residues: Vacuolar protein sorting-associated protein 26C (297 aa).

The protein belongs to the VPS26 family. Component of the commander complex that is essential for endosomal recycling of transmembrane cargos; the commander complex is composed of the CCC subcomplex and the retriever subcomplex. Component of the heterotrimeric retriever complex consisting of VPS26C, VPS29 and VPS35L; within the complex interacts with VPS35L. Interacts with SNX17 (via C-terminus); the interaction is direct and associates SNX17 with the retriever complex. Interacts with SNX31; the interaction is direct. In terms of tissue distribution, ubiquitously expressed.

It is found in the endosome. Its function is as follows. Component of the commander complex that is essential for endosomal recycling of transmembrane cargos; the commander complex is composed of the CCC subcomplex and the retriever subcomplex. Component of the retriever complex, which is a heterotrimeric complex related to retromer cargo-selective complex (CSC) and essential for retromer-independent retrieval and recycling of numerous cargos such as integrin alpha-5/beta-1 (ITGA5:ITGB1). The recruitment of the retriever complex to the endosomal membrane involves CCC and WASH complexes. In the endosomes, drives the retriever and recycling of NxxY-motif-containing cargo proteins by coupling to SNX17, a cargo essential for the homeostatic maintenance of numerous cell surface proteins associated with processes that include cell migration, cell adhesion, nutrient supply and cell signaling. (Microbial infection) The heterotrimeric retriever complex, in collaboration with the CCC complex, mediates the exit of human papillomavirus to the cell surface. In Homo sapiens (Human), this protein is Vacuolar protein sorting-associated protein 26C.